A 389-amino-acid polypeptide reads, in one-letter code: S-adenosylmethionine synthase (389 aa).

H19 serves as a coordination point for ATP. D21 serves as a coordination point for Mg(2+). Residue E47 coordinates K(+). The L-methionine site is built by E60 and Q103. Residues 103–113 (QSGDIAQGVDR) form a flexible loop region. Residues 168 to 170 (DGK), 234 to 235 (RF), D243, 249 to 250 (RK), A266, and K270 contribute to the ATP site. D243 is a binding site for L-methionine. K274 is a binding site for L-methionine.

It belongs to the AdoMet synthase family. As to quaternary structure, homotetramer; dimer of dimers. It depends on Mg(2+) as a cofactor. K(+) is required as a cofactor.

The protein localises to the cytoplasm. The catalysed reaction is L-methionine + ATP + H2O = S-adenosyl-L-methionine + phosphate + diphosphate. Its pathway is amino-acid biosynthesis; S-adenosyl-L-methionine biosynthesis; S-adenosyl-L-methionine from L-methionine: step 1/1. Its function is as follows. Catalyzes the formation of S-adenosylmethionine (AdoMet) from methionine and ATP. The overall synthetic reaction is composed of two sequential steps, AdoMet formation and the subsequent tripolyphosphate hydrolysis which occurs prior to release of AdoMet from the enzyme. The polypeptide is S-adenosylmethionine synthase (Nitratidesulfovibrio vulgaris (strain DSM 19637 / Miyazaki F) (Desulfovibrio vulgaris)).